The sequence spans 134 residues: CDGSH iron-sulfur domain-containing protein 2 homolog (134 aa).

Topologically, residues 1 to 35 are lumenal; the sequence is MESLSQLVKSTLPNYLSNLPIPDSVGGWFKLSFKD. Residues 36 to 58 traverse the membrane as a helical segment; the sequence is WLALIPPTVVVAGIGYTGYLAFC. Topologically, residues 59-134 are cytoplasmic; sequence PAAQARCSAT…NVGPVVVKKQ (76 aa). [2Fe-2S] cluster is bound by residues cysteine 100, cysteine 102, cysteine 111, and histidine 115.

This sequence belongs to the CISD protein family. CISD2 subfamily. [2Fe-2S] cluster is required as a cofactor.

The protein resides in the endoplasmic reticulum membrane. This chain is CDGSH iron-sulfur domain-containing protein 2 homolog, found in Drosophila ananassae (Fruit fly).